A 416-amino-acid polypeptide reads, in one-letter code: Serine hydroxymethyltransferase (416 aa).

(6S)-5,6,7,8-tetrahydrofolate is bound by residues L117 and 121-123; that span reads GHL. Position 226 is an N6-(pyridoxal phosphate)lysine (K226). A (6S)-5,6,7,8-tetrahydrofolate-binding site is contributed by E242.

This sequence belongs to the SHMT family. As to quaternary structure, homodimer. Pyridoxal 5'-phosphate is required as a cofactor.

It localises to the cytoplasm. The catalysed reaction is (6R)-5,10-methylene-5,6,7,8-tetrahydrofolate + glycine + H2O = (6S)-5,6,7,8-tetrahydrofolate + L-serine. It functions in the pathway one-carbon metabolism; tetrahydrofolate interconversion. The protein operates within amino-acid biosynthesis; glycine biosynthesis; glycine from L-serine: step 1/1. Its function is as follows. Catalyzes the reversible interconversion of serine and glycine with tetrahydrofolate (THF) serving as the one-carbon carrier. This reaction serves as the major source of one-carbon groups required for the biosynthesis of purines, thymidylate, methionine, and other important biomolecules. Also exhibits THF-independent aldolase activity toward beta-hydroxyamino acids, producing glycine and aldehydes, via a retro-aldol mechanism. This chain is Serine hydroxymethyltransferase, found in Endomicrobium trichonymphae.